A 244-amino-acid chain; its full sequence is Phosphoadenosine 5'-phosphosulfate reductase (244 aa).

Cys239 serves as the catalytic Nucleophile; cysteine thiosulfonate intermediate.

Belongs to the PAPS reductase family. CysH subfamily.

It localises to the cytoplasm. It catalyses the reaction [thioredoxin]-disulfide + sulfite + adenosine 3',5'-bisphosphate + 2 H(+) = [thioredoxin]-dithiol + 3'-phosphoadenylyl sulfate. The protein operates within sulfur metabolism; hydrogen sulfide biosynthesis; sulfite from sulfate: step 3/3. Catalyzes the formation of sulfite from phosphoadenosine 5'-phosphosulfate (PAPS) using thioredoxin as an electron donor. This is Phosphoadenosine 5'-phosphosulfate reductase from Salmonella agona (strain SL483).